Reading from the N-terminus, the 359-residue chain is 3-dehydroquinate synthase (359 aa).

NAD(+) contacts are provided by residues 71-76 (DGEQYK), 104-108 (GVVGD), 128-129 (TT), Lys-141, Lys-150, and 168-171 (TLNT). Glu-183, His-247, and His-264 together coordinate Zn(2+).

Belongs to the sugar phosphate cyclases superfamily. Dehydroquinate synthase family. Co(2+) is required as a cofactor. Requires Zn(2+) as cofactor. It depends on NAD(+) as a cofactor.

It is found in the cytoplasm. It catalyses the reaction 7-phospho-2-dehydro-3-deoxy-D-arabino-heptonate = 3-dehydroquinate + phosphate. It participates in metabolic intermediate biosynthesis; chorismate biosynthesis; chorismate from D-erythrose 4-phosphate and phosphoenolpyruvate: step 2/7. Catalyzes the conversion of 3-deoxy-D-arabino-heptulosonate 7-phosphate (DAHP) to dehydroquinate (DHQ). In Coxiella burnetii (strain Dugway 5J108-111), this protein is 3-dehydroquinate synthase.